Reading from the N-terminus, the 521-residue chain is Histone acetyltransferase ESA1 (521 aa).

Residues 1–32 are disordered; the sequence is MSVGEDKSGTATPQHNTSIRITDDEERSDEKK. Residues 9–20 show a composition bias toward polar residues; sequence GTATPQHNTSIR. In terms of domain architecture, Tudor-knot spans 39–90; it reads ITGCKLYVSKDGEYRLAEILQDHMKKGKKVFYVHYQEFNKRLDEWISADRID. Residues 100–154 are disordered; it reads VKVDKKDDKKEGKSKTSKKSKSKNGKTGSKSVTSTPQPNEDTAPGTPRNDDEMDL. A compositionally biased stretch (basic and acidic residues) spans 101–113; sequence KVDKKDDKKEGKS. Over residues 114–123 the composition is skewed to basic residues; the sequence is KTSKKSKSKN. Positions 124–133 are enriched in low complexity; sequence GKTGSKSVTS. The MYST-type HAT domain maps to 192–509; sequence ARVRNLSSVI…LDPSKLSWTP (318 aa). The C2HC MYST-type; degenerate zinc finger occupies 225-250; it reads IYICDFTLAYFGSLKQFERFRTKCSM. Positions 275-296 match the ESA1-RPD3 motif motif; it reads RTWCRNLCLLSKLFLDHKTLYY. K292 carries the N6-acetyllysine; by autocatalysis modification. Acetyl-CoA is bound by residues 333-337 and 342-348; these read ACILT and QKMGFGK. E368 acts as the Proton donor/acceptor in catalysis. S372 serves as a coordination point for acetyl-CoA. Composition is skewed to polar residues over residues 403 to 418 and 426 to 436; these read NNPQ…DSSV and QSANIQNGNTP. The disordered stretch occupies residues 403–438; it reads NNPQLLTEASSKDSSVSPPPGGRQSANIQNGNTPSS.

The protein belongs to the MYST (SAS/MOZ) family. In terms of assembly, component of the NuA4 histone acetyltransferase complex. Autoacetylation at Lys-292 is required for proper function.

The protein resides in the nucleus. It localises to the chromosome. It carries out the reaction L-lysyl-[histone] + acetyl-CoA = N(6)-acetyl-L-lysyl-[histone] + CoA + H(+). It catalyses the reaction L-lysyl-[protein] + acetyl-CoA = N(6)-acetyl-L-lysyl-[protein] + CoA + H(+). The catalysed reaction is 2-hydroxyisobutanoyl-CoA + L-lysyl-[protein] = N(6)-(2-hydroxyisobutanoyl)-L-lysyl-[protein] + CoA + H(+). The enzyme catalyses (2E)-butenoyl-CoA + L-lysyl-[protein] = N(6)-(2E)-butenoyl-L-lysyl-[protein] + CoA + H(+). Its function is as follows. Catalytic component of the NuA4 histone acetyltransferase (HAT) complex which is involved in epigenetic transcriptional activation of selected genes principally by acetylation of nucleosomal histones H4, H3, H2B, H2A and H2A variant H2A.Z. Acetylates histone H4 to form H4K5ac, H4K8ac, H4K12ac and H4K16ac, histone H3 to form H3K14ac, and histone H2A to form H2AK4ac and H2AK7ac. The NuA4 complex is involved in the DNA damage response and is required for chromosome segregation. The NuA4 complex plays a direct role in repair of DNA double-strand breaks (DSBs) through homologous recombination. Recruitment to promoters depends on H3K4me. Also acetylates non-histone proteins. In addition to protein acetyltransferase, can use different acyl-CoA substrates, such as 2-hydroxyisobutanoyl-CoA (2-hydroxyisobutyryl-CoA) or (2E)-butenoyl-CoA (crotonyl-CoA), and is able to mediate protein 2-hydroxyisobutyrylation and crotonylation, respectively. This Debaryomyces hansenii (strain ATCC 36239 / CBS 767 / BCRC 21394 / JCM 1990 / NBRC 0083 / IGC 2968) (Yeast) protein is Histone acetyltransferase ESA1 (ESA1).